The chain runs to 691 residues: Guanylate cyclase soluble subunit alpha-1 (691 aa).

The interval 26–65 (PREPLGEATGSGPASTPGQPGVCPGVPDKNPPGRLPRRKT) is disordered. The 128-residue stretch at 482–609 (TMLFSDIVGF…NNVTLANKFE (128 aa)) folds into the Guanylate cyclase domain.

This sequence belongs to the adenylyl cyclase class-4/guanylyl cyclase family. Heterodimer of an alpha and a beta chain.

The protein localises to the cytoplasm. The enzyme catalyses GTP = 3',5'-cyclic GMP + diphosphate. With respect to regulation, activated by nitric oxide in the presence of magnesium or manganese ions. In Bos taurus (Bovine), this protein is Guanylate cyclase soluble subunit alpha-1 (GUCY1A1).